We begin with the raw amino-acid sequence, 263 residues long: Endonuclease 8 (263 aa).

Pro-2 acts as the Schiff-base intermediate with DNA in catalysis. Glu-3 functions as the Proton donor in the catalytic mechanism. Residue Lys-53 is the Proton donor; for beta-elimination activity of the active site. The DNA site is built by Gln-70, Arg-125, and Asn-169. An FPG-type zinc finger spans residues 229–263 (KVFHRDGEACERCGGIIEKTTLSSRPFYWCAHCQK). Arg-253 (proton donor; for delta-elimination activity) is an active-site residue.

The protein belongs to the FPG family. The cofactor is Zn(2+).

It carries out the reaction 2'-deoxyribonucleotide-(2'-deoxyribose 5'-phosphate)-2'-deoxyribonucleotide-DNA = a 3'-end 2'-deoxyribonucleotide-(2,3-dehydro-2,3-deoxyribose 5'-phosphate)-DNA + a 5'-end 5'-phospho-2'-deoxyribonucleoside-DNA + H(+). Functionally, involved in base excision repair of DNA damaged by oxidation or by mutagenic agents. Acts as a DNA glycosylase that recognizes and removes damaged bases. Has a preference for oxidized pyrimidines, such as thymine glycol, 5,6-dihydrouracil and 5,6-dihydrothymine. Has AP (apurinic/apyrimidinic) lyase activity and introduces nicks in the DNA strand. Cleaves the DNA backbone by beta-delta elimination to generate a single-strand break at the site of the removed base with both 3'- and 5'-phosphates. The protein is Endonuclease 8 of Salmonella typhi.